The sequence spans 205 residues: Non-specific lipid transfer protein GPI-anchored 13 (205 aa).

The first 24 residues, Met-1–Ala-24, serve as a signal peptide directing secretion. 4 disulfides stabilise this stretch: Cys-36–Cys-77, Cys-46–Cys-61, Cys-62–Cys-104, and Cys-75–Cys-113. N-linked (GlcNAc...) asparagine glycosylation is found at Asn-93, Asn-137, and Asn-165. The tract at residues Ser-141–Thr-176 is disordered. A lipid anchor (GPI-anchor amidated asparagine) is attached at Asn-177. A propeptide spans His-178–Val-205 (removed in mature form).

Belongs to the plant LTP family. Expressed preferentially in expanding leaves and sepals, restricted to the distal side. Expressed at low levels in roots and stems.

The protein localises to the cell membrane. Its function is as follows. Probable lipid transfer protein. The protein is Non-specific lipid transfer protein GPI-anchored 13 of Arabidopsis thaliana (Mouse-ear cress).